A 321-amino-acid chain; its full sequence is Cytochrome c biogenesis protein CcsA (321 aa).

7 consecutive transmembrane segments (helical) span residues 9-29 (ILTHISFSTISIVITIHLITL), 44-64 (GMIATFFCITGFLVSRWASSG), 68-88 (LSNLYESLIFLSWALYILHMI), 143-163 (MLLSYATLLCGSLLSAALLMI), 226-246 (VISLGFTLLTIGILCGAVWAN), 260-274 (TWAFITWTIFAIYLH), and 289-309 (VASIGFLIIWICYFGINLLGI).

This sequence belongs to the CcmF/CycK/Ccl1/NrfE/CcsA family. May interact with Ccs1.

It is found in the plastid. The protein resides in the chloroplast thylakoid membrane. In terms of biological role, required during biogenesis of c-type cytochromes (cytochrome c6 and cytochrome f) at the step of heme attachment. This chain is Cytochrome c biogenesis protein CcsA, found in Oryza sativa subsp. indica (Rice).